Reading from the N-terminus, the 425-residue chain is MLDQRLVRDNPETIAQQLGRRGKAVDLTKLQLIAQQQRDLEQQRSGLQAEGNRIGKEVGQRIKSGADPKGDEVAELRQQGNAIKQKVAVLEEEEKQLSSELKQQLLGFPNLPSEACPDGRSEDDNVEVRRWGTPRVDDGLYEHWQIAERLQLFDTERSVRIAQSRFVTLMGQGARLERALINFMLDLHTSKGYREVLPPVLVNSASLTGSGQLPKFAEESFRCAEDDLWLTPTAEVPVTSLHRDEIIPADQLPLRYAAYSPCFRREAGSYGRDTRGLIRLHQFNKVELYWFVHPDHSDEAHQRITADAEAVLQALELPYRVLDLCTADLGFSARRTYDLEVWLPGAGAYREISSCSVCGDFQARRSSIRTKEGKATKLVHTLNGSGLAVGRTMAALLENGQQSDGSVLLPKALVPYVGRERLQPE.

233-235 (TAE) provides a ligand contact to L-serine. 264 to 266 (RRE) provides a ligand contact to ATP. Position 287 (Glu-287) interacts with L-serine. 351 to 354 (EISS) is an ATP binding site. Residue Ser-385 coordinates L-serine.

It belongs to the class-II aminoacyl-tRNA synthetase family. Type-1 seryl-tRNA synthetase subfamily. Homodimer. The tRNA molecule binds across the dimer.

It localises to the cytoplasm. It carries out the reaction tRNA(Ser) + L-serine + ATP = L-seryl-tRNA(Ser) + AMP + diphosphate + H(+). The catalysed reaction is tRNA(Sec) + L-serine + ATP = L-seryl-tRNA(Sec) + AMP + diphosphate + H(+). It functions in the pathway aminoacyl-tRNA biosynthesis; selenocysteinyl-tRNA(Sec) biosynthesis; L-seryl-tRNA(Sec) from L-serine and tRNA(Sec): step 1/1. Catalyzes the attachment of serine to tRNA(Ser). Is also able to aminoacylate tRNA(Sec) with serine, to form the misacylated tRNA L-seryl-tRNA(Sec), which will be further converted into selenocysteinyl-tRNA(Sec). This is Serine--tRNA ligase from Synechococcus sp. (strain CC9605).